The sequence spans 388 residues: Chorismate synthase (388 aa).

NADP(+) contacts are provided by R39 and R45. Residues 130–132, 251–252, G296, 311–315, and R337 each bind FMN; these read RSS, NA, and KPIPT.

This sequence belongs to the chorismate synthase family. Homotetramer. FMNH2 serves as cofactor.

It carries out the reaction 5-O-(1-carboxyvinyl)-3-phosphoshikimate = chorismate + phosphate. It participates in metabolic intermediate biosynthesis; chorismate biosynthesis; chorismate from D-erythrose 4-phosphate and phosphoenolpyruvate: step 7/7. Catalyzes the anti-1,4-elimination of the C-3 phosphate and the C-6 proR hydrogen from 5-enolpyruvylshikimate-3-phosphate (EPSP) to yield chorismate, which is the branch point compound that serves as the starting substrate for the three terminal pathways of aromatic amino acid biosynthesis. This reaction introduces a second double bond into the aromatic ring system. The sequence is that of Chorismate synthase from Streptococcus pyogenes serotype M1.